We begin with the raw amino-acid sequence, 352 residues long: Homocitrate synthase, omega subunit (352 aa).

The protein belongs to the alpha-IPM synthase/homocitrate synthase family. In terms of assembly, heterodimer of an alpha and an omega chain.

The catalysed reaction is acetyl-CoA + 2-oxoglutarate + H2O = (2R)-homocitrate + CoA + H(+). In terms of biological role, this protein is a Fe-Mo-cofactor biosynthetic component. This chain is Homocitrate synthase, omega subunit (nifV-OMEGA), found in Clostridium pasteurianum.